We begin with the raw amino-acid sequence, 182 residues long: Large ribosomal subunit protein uL6 (182 aa).

This sequence belongs to the universal ribosomal protein uL6 family. Part of the 50S ribosomal subunit.

Functionally, this protein binds to the 23S rRNA, and is important in its secondary structure. It is located near the subunit interface in the base of the L7/L12 stalk, and near the tRNA binding site of the peptidyltransferase center. This is Large ribosomal subunit protein uL6 from Karelsulcia muelleri (strain GWSS) (Sulcia muelleri).